Consider the following 486-residue polypeptide: Monocarboxylate transporter 12 (486 aa).

At 1–9 (MTKITRVGS) the chain is on the cytoplasmic side. 6 helical membrane-spanning segments follow: residues 10 to 30 (ASPP…LVTI), 58 to 78 (AWIH…GSVV), 86 to 106 (AGIM…SFAT), 115 to 135 (LGVL…AMVG), 148 to 168 (IAMS…QLLI), and 177 to 197 (LLIL…MRPI). The span at 201 to 220 (EDPSGPEKSHDRDAQREDCK) shows a compositional bias: basic and acidic residues. Positions 201 to 221 (EDPSGPEKSHDRDAQREDCKQ) are disordered. A run of 6 helical transmembrane segments spans residues 253-273 (FVVL…LFVY), 289-309 (AFLM…FGWL), 320-340 (YVCY…LPML), 353-373 (FGYF…EIVG), 383-403 (VVYF…GWLV), and 410-430 (TAAF…LGFA). At 431-486 (KIAKRMKRTQVPFLVKDSDPKLHLWTNGSVAYSIAKELDQKDEESLAKARTGCNLT) the chain is on the cytoplasmic side.

This sequence belongs to the major facilitator superfamily. Monocarboxylate porter (TC 2.A.1.13) family. In terms of assembly, interacts with isoform 2 of BSG; this interaction is required for its localization to the plasma membrane. In terms of tissue distribution, detected in kidney, choroid plexus, testis, lung, stomach, large and small intestine, spleen, fat and parotid gland. In eye, expressed in cornea, ciliary epithelium, lens epithelium and lens fiber.

The protein resides in the cell membrane. It localises to the basolateral cell membrane. It carries out the reaction creatine(in) = creatine(out). The enzyme catalyses guanidinoacetate(in) = guanidinoacetate(out). With respect to regulation, creatine uptake is inhibited by carbonyl cyanide 3-chlorophenylhydrazone (CCCP) and by valinomycin. Functions as a transporter for creatine and as well for its precursor guanidinoacetate. Transport of creatine and GAA is independent of resting membrane potential and extracellular Na(+), Cl(-), or pH. Contributes to the process of creatine biosynthesis and distribution. The sequence is that of Monocarboxylate transporter 12 from Rattus norvegicus (Rat).